A 385-amino-acid polypeptide reads, in one-letter code: 1-deoxy-D-xylulose 5-phosphate reductoisomerase (385 aa).

NADPH is bound by residues Thr10, Gly11, Ser12, Ile13, Gly36, Asn38, and Asn122. Lys123 lines the 1-deoxy-D-xylulose 5-phosphate pocket. NADPH is bound at residue Glu124. Asp148 is a binding site for Mn(2+). Positions 149, 150, 174, and 197 each coordinate 1-deoxy-D-xylulose 5-phosphate. Position 150 (Glu150) interacts with Mn(2+). Position 203 (Gly203) interacts with NADPH. Positions 210, 215, 216, and 219 each coordinate 1-deoxy-D-xylulose 5-phosphate. Residue Glu219 coordinates Mn(2+).

This sequence belongs to the DXR family. Requires Mg(2+) as cofactor. The cofactor is Mn(2+).

The catalysed reaction is 2-C-methyl-D-erythritol 4-phosphate + NADP(+) = 1-deoxy-D-xylulose 5-phosphate + NADPH + H(+). The protein operates within isoprenoid biosynthesis; isopentenyl diphosphate biosynthesis via DXP pathway; isopentenyl diphosphate from 1-deoxy-D-xylulose 5-phosphate: step 1/6. Catalyzes the NADPH-dependent rearrangement and reduction of 1-deoxy-D-xylulose-5-phosphate (DXP) to 2-C-methyl-D-erythritol 4-phosphate (MEP). This Geobacter sp. (strain M21) protein is 1-deoxy-D-xylulose 5-phosphate reductoisomerase.